The chain runs to 641 residues: Chaperone protein DnaK 2 (641 aa).

A Phosphothreonine; by autocatalysis modification is found at Thr-199. The segment covering 601 to 616 has biased composition (low complexity); it reads MAQQQAQAQHAQSSQQ. Residues 601-641 form a disordered region; the sequence is MAQQQAQAQHAQSSQQTNDTTGQSSTDDDVFEAEFEEVKDK. Acidic residues predominate over residues 626 to 635; it reads TDDDVFEAEF.

The protein belongs to the heat shock protein 70 family.

Its function is as follows. Acts as a chaperone. The chain is Chaperone protein DnaK 2 from Photobacterium profundum (strain SS9).